A 768-amino-acid polypeptide reads, in one-letter code: Pentatricopeptide repeat-containing protein At3g53360, mitochondrial (768 aa).

Residues 1-70 (MATMLRLGAR…SSFKIRLRTY (70 aa)) constitute a mitochondrion transit peptide. PPR repeat units lie at residues 30–60 (TEEL…AQKN), 66–100 (RLRT…NCKY), 101–131 (DTIL…MPER), 132–166 (NLVS…DLVP), 167–201 (DQFA…ESSS), 202–232 (HLIA…IPMK), 233–267 (DLIS…GVFH), 269–303 (NEYI…ELAG), 304–334 (NAIA…IERP), 335–369 (DTAS…GFIP), 370–404 (DAIS…GFLA), 405–435 (DLTV…FRNN), 437–471 (DSVS…ECEP), 472–506 (DHIT…GLAP), 507–537 (EQFI…MDNR), 538–572 (DVVS…GIEP), 573–608 (NHVT…GISP), and 609–639 (TKEH…MKLE). Residues 644 to 719 (VWKTLLSACK…IPGQSWIEIE (76 aa)) form a type E motif region. The type E(+) motif stretch occupies residues 720–750 (DKIHIFFAEDIFHPERDDIYTVLHNIWSQML).

It belongs to the PPR family. PCMP-E subfamily.

It localises to the mitochondrion. This chain is Pentatricopeptide repeat-containing protein At3g53360, mitochondrial (PCMP-E86), found in Arabidopsis thaliana (Mouse-ear cress).